We begin with the raw amino-acid sequence, 144 residues long: Large ribosomal subunit protein uL16 (144 aa).

Belongs to the universal ribosomal protein uL16 family. In terms of assembly, part of the 50S ribosomal subunit.

Functionally, binds 23S rRNA and is also seen to make contacts with the A and possibly P site tRNAs. This is Large ribosomal subunit protein uL16 from Caldanaerobacter subterraneus subsp. tengcongensis (strain DSM 15242 / JCM 11007 / NBRC 100824 / MB4) (Thermoanaerobacter tengcongensis).